The primary structure comprises 319 residues: MASEEKIYDVIIIGAGPAGMTAALYTSRADLDTLMIERGVPGGQMVNTAEVENYPGFDSILGPDLSDKMLSGAKQFGAEYAYGDIKEVIDGKEFKTVTAGSKTYKARAIIIATGAEHRKLGAAGEEELSGRGVSYCAVCDGAFFKNRELVVVGGGDSAVEEGTYLTRYADKVTIVHRRDKLRAQQILQDRAFKDEKVDFIWNNTVEEIIGDGKKVTSVKLVSTVDGSESIMPVDGVFIYVGLVPLTKAFLSLGITDEEGYIVTDEEMRTNLPGIFAAGDVRAKSLRQIVTATGDGGLAGQNAQKYVEELKEALEAEAAK.

37–44 (ERGVPGGQ) provides a ligand contact to FAD. A disulfide bond links cysteine 136 and cysteine 139. An FAD-binding site is contributed by 279 to 288 (DVRAKSLRQI).

The protein belongs to the class-II pyridine nucleotide-disulfide oxidoreductase family. Homodimer. It depends on FAD as a cofactor.

The protein resides in the cytoplasm. It carries out the reaction [thioredoxin]-dithiol + NADP(+) = [thioredoxin]-disulfide + NADPH + H(+). This Listeria innocua serovar 6a (strain ATCC BAA-680 / CLIP 11262) protein is Thioredoxin reductase (trxB).